We begin with the raw amino-acid sequence, 1004 residues long: Putative helicase MOV-10 (1004 aa).

K148 bears the N6-acetyllysine mark. Position 254 is a phosphothreonine (T254). Phosphoserine is present on S433. 525 to 532 (GPPGTGKT) serves as a coordination point for ATP. The DEAG box motif lies at 646-649 (DEAG). Residues 922 to 966 (NPLLLGHDPDWKTFLEFCKENGGYTGCPFPAKLDLQQGQDLLQGL) are interaction with AGO2 and APOBEC3G. Positions 966-1004 (LSKLSPSTSGPRRHQNLPQEREGEGGLPLQVEPEWRNEL) are disordered. At S970 the chain carries Phosphoserine.

Belongs to the DNA2/NAM7 helicase family. SDE3 subfamily. As to quaternary structure, interacts with DICER1, AGO2, TARBP2, EIF6 and RPL7A (60S ribosome subunit); they form a large RNA-induced silencing complex (RISC). Interacts with APOBEC3G in an RNA-dependent manner. Interacts with TRIM71 (via NHL repeats) in an RNA-dependent manner. Interacts with both protein products of LIRE1, ORF1p and ORF2p. Interacts with TUT4 and, to a lesser extent, TUT7; the interactions are RNA-dependent. Interacts with AGO2, TNRC6B and UPF1; the interactions are direct and RNA-dependent. Interacts with FMR1; this interaction is direct, occurs in an RNA-dependent manner on polysomes and induces association of MOV10 with RNAs. Interacts with SHFL; the interaction increases in presence of RNA. Interacts with DHX34; the interaction is RNA-independent. Interacts with RBM46. Post-translationally, ubiquitinated by the DCX(DCAF12) complex that specifically recognizes the glutamate-leucine (Glu-Leu) degron at the C-terminus, leading to its degradation.

The protein localises to the cytoplasm. The protein resides in the P-body. It is found in the nucleus. Its subcellular location is the cytoplasmic ribonucleoprotein granule. It localises to the stress granule. It catalyses the reaction ATP + H2O = ADP + phosphate + H(+). Its function is as follows. 5' to 3' RNA helicase that is involved in a number of cellular roles ranging from mRNA metabolism and translation, modulation of viral infectivity, inhibition of retrotransposition, or regulation of synaptic transmission. Plays an important role in innate antiviral immunity by promoting type I interferon production. Mechanistically, specifically uses IKKepsilon/IKBKE as the mediator kinase for IRF3 activation. Contributes to UPF1 mRNA target degradation by translocation along 3' UTRs. Required for microRNA (miRNA)-mediated gene silencing by the RNA-induced silencing complex (RISC). Required for both miRNA-mediated translational repression and miRNA-mediated cleavage of complementary mRNAs by RISC. In cooperation with FMR1, regulates miRNA-mediated translational repression by AGO2. Restricts retrotransposition of long interspersed element-1 (LINE-1) in cooperation with TUT4 and TUT7 counteracting the RNA chaperonne activity of L1RE1. Facilitates LINE-1 uridylation by TUT4 and TUT7. Required for embryonic viability and for normal central nervous system development and function. Plays two critical roles in early brain development: suppresses retroelements in the nucleus by directly inhibiting cDNA synthesis, while regulates cytoskeletal mRNAs to influence neurite outgrowth in the cytosol. May function as a messenger ribonucleoprotein (mRNP) clearance factor. The chain is Putative helicase MOV-10 (Mov10) from Mus musculus (Mouse).